We begin with the raw amino-acid sequence, 160 residues long: uncharacterized protein (160 aa).

The first 18 residues, 1–18 (MELLSLAILSSFFAVANQ), serve as a signal peptide directing secretion.

This is an uncharacterized protein from Caenorhabditis elegans.